A 224-amino-acid polypeptide reads, in one-letter code: tRNA (guanine-N(7)-)-methyltransferase (224 aa).

S-adenosyl-L-methionine is bound by residues glutamate 54, glutamate 79, glutamate 106, and aspartate 129. Residue aspartate 129 is part of the active site. The substrate site is built by lysine 133 and aspartate 165.

This sequence belongs to the class I-like SAM-binding methyltransferase superfamily. TrmB family.

The enzyme catalyses guanosine(46) in tRNA + S-adenosyl-L-methionine = N(7)-methylguanosine(46) in tRNA + S-adenosyl-L-homocysteine. The protein operates within tRNA modification; N(7)-methylguanine-tRNA biosynthesis. In terms of biological role, catalyzes the formation of N(7)-methylguanine at position 46 (m7G46) in tRNA. The chain is tRNA (guanine-N(7)-)-methyltransferase from Chlamydia caviae (strain ATCC VR-813 / DSM 19441 / 03DC25 / GPIC) (Chlamydophila caviae).